Reading from the N-terminus, the 106-residue chain is ATP-dependent Clp protease adapter protein ClpS (106 aa).

Residues Met1–Asp10 are compositionally biased toward basic and acidic residues. Positions Met1–Ala23 are disordered.

Belongs to the ClpS family. Binds to the N-terminal domain of the chaperone ClpA.

In terms of biological role, involved in the modulation of the specificity of the ClpAP-mediated ATP-dependent protein degradation. This chain is ATP-dependent Clp protease adapter protein ClpS, found in Xylella fastidiosa (strain M23).